We begin with the raw amino-acid sequence, 406 residues long: COP9 signalosome complex subunit 4 (406 aa).

Residues 197–366 form the PCI domain; the sequence is YRRKFIEAAQ…GIVHFETREP (170 aa).

Belongs to the CSN4 family. Component of the CSN complex, probably composed of cops1, cops2, cops3, cops4, cops5, cops6, cops7, cops8 and cops9.

The protein localises to the cytoplasm. The protein resides in the nucleus. It is found in the cytoplasmic vesicle. It localises to the secretory vesicle. Its subcellular location is the synaptic vesicle. In terms of biological role, component of the COP9 signalosome complex (CSN), a complex involved in various cellular and developmental processes. The CSN complex is an essential regulator of the ubiquitin (Ubl) conjugation pathway by mediating the deneddylation of the cullin subunits of E3 ligase complexes, leading to modify the Ubl ligase activity. This chain is COP9 signalosome complex subunit 4 (cops4), found in Danio rerio (Zebrafish).